The sequence spans 331 residues: Protein RecA (331 aa).

66–73 (GPESSGKT) lines the ATP pocket.

It belongs to the RecA family.

The protein localises to the cytoplasm. Its function is as follows. Can catalyze the hydrolysis of ATP in the presence of single-stranded DNA, the ATP-dependent uptake of single-stranded DNA by duplex DNA, and the ATP-dependent hybridization of homologous single-stranded DNAs. It interacts with LexA causing its activation and leading to its autocatalytic cleavage. In Acholeplasma laidlawii, this protein is Protein RecA.